A 125-amino-acid chain; its full sequence is Large ribosomal subunit protein bL12 (125 aa).

The protein belongs to the bacterial ribosomal protein bL12 family. In terms of assembly, homodimer. Part of the ribosomal stalk of the 50S ribosomal subunit. Forms a multimeric L10(L12)X complex, where L10 forms an elongated spine to which 2 to 4 L12 dimers bind in a sequential fashion. Binds GTP-bound translation factors.

Functionally, forms part of the ribosomal stalk which helps the ribosome interact with GTP-bound translation factors. Is thus essential for accurate translation. This chain is Large ribosomal subunit protein bL12, found in Thermus thermophilus (strain ATCC BAA-163 / DSM 7039 / HB27).